A 365-amino-acid polypeptide reads, in one-letter code: Chorismate synthase (365 aa).

Basic and acidic residues predominate over residues 41–51; it reads IQKELDRRRPG. Residues 41 to 62 are disordered; the sequence is IQKELDRRRPGQSEVSTPRSEA. NADP(+) is bound at residue Arg48. Residues 125–127, Gly285, 300–304, and Arg327 each bind FMN; these read RSS and KPTPS.

Belongs to the chorismate synthase family. The cofactor is FMNH2.

The enzyme catalyses 5-O-(1-carboxyvinyl)-3-phosphoshikimate = chorismate + phosphate. It participates in metabolic intermediate biosynthesis; chorismate biosynthesis; chorismate from D-erythrose 4-phosphate and phosphoenolpyruvate: step 7/7. In terms of biological role, catalyzes the anti-1,4-elimination of the C-3 phosphate and the C-6 proR hydrogen from 5-enolpyruvylshikimate-3-phosphate (EPSP) to yield chorismate, which is the branch point compound that serves as the starting substrate for the three terminal pathways of aromatic amino acid biosynthesis. This reaction introduces a second double bond into the aromatic ring system. This is Chorismate synthase from Methanosarcina mazei (strain ATCC BAA-159 / DSM 3647 / Goe1 / Go1 / JCM 11833 / OCM 88) (Methanosarcina frisia).